The chain runs to 602 residues: MSESERSEAFGTPDAAEVERLRREVAALREQLEGSAARGPGDSGRLRDLNQLEARIDSLNARNAKLMDTLKEARQQLLALREEVDRLGQPPSGYGVLLAVQTDETVDVFTSGRKMRVTCSPNIETSELRRGQTVRLNEALTVVEAGNFESVGEISTLREVLDDGHRALVVGHADEERIVWLADPLIAPDLSEVSEDADGADLKPRKLRPGDSLLVDTKAGYAFERIPKAEVEDLVLEEVPDVSYSDIGGLARQIEQIRDAVELPFLHKDLYQEYSLRPPKGVLLYGPPGCGKTLIAKAVANSLAKKMAELRGDDSREAKSYFLNIKGPELLNKFVGETERHIRLIFQRAREKASDGTPVIVFFDEMDSIFRTRGTGVSSDVETTVVPQLLSEIDGVEGLENVIVIGASNREDMIDPAILRPGRLDVKIKIERPDAESAQDIFSKYLTVDLPVHSEDLAEFGGDRGLTVKAMIEKVVDRMYAEIDDNRFLEVTYANGDKEVMYFKDFNSGAMIQNVVDRAKKNAIKSVLETGQKGLRIQHLLDSIVDEFAENEDLPNTTNPDDWARISGKKGERIVYIRTLVTGKSSSASRAIDTESSLGQYL.

The stretch at 13-89 (PDAAEVERLR…LREEVDRLGQ (77 aa)) forms a coiled coil. An ATP-binding site is contributed by 289–294 (GCGKTL). The interval 601–602 (YL) is docks into pockets in the proteasome alpha-ring.

Belongs to the AAA ATPase family. As to quaternary structure, homohexamer. Assembles into a hexameric ring structure that caps the 20S proteasome core. Strongly interacts with the prokaryotic ubiquitin-like protein Pup through a hydrophobic interface; the interacting region of ARC lies in its N-terminal coiled-coil domain. There is one Pup binding site per ARC hexamer ring. Upon ATP-binding, the C-terminus of ARC interacts with the alpha-rings of the proteasome core, possibly by binding to the intersubunit pockets.

The protein operates within protein degradation; proteasomal Pup-dependent pathway. Its function is as follows. ATPase which is responsible for recognizing, binding, unfolding and translocation of pupylated proteins into the bacterial 20S proteasome core particle. May be essential for opening the gate of the 20S proteasome via an interaction with its C-terminus, thereby allowing substrate entry and access to the site of proteolysis. Thus, the C-termini of the proteasomal ATPase may function like a 'key in a lock' to induce gate opening and therefore regulate proteolysis. The chain is Proteasome-associated ATPase from Mycobacteroides abscessus (strain ATCC 19977 / DSM 44196 / CCUG 20993 / CIP 104536 / JCM 13569 / NCTC 13031 / TMC 1543 / L948) (Mycobacterium abscessus).